Consider the following 154-residue polypeptide: Insulin-like growth factor 1 (154 aa).

The segment at 50 to 78 (GPETLCGAELVDALQFVCGDRGFYFNKPT) is b. Disulfide bonds link Cys55–Cys97, Cys67–Cys110, and Cys96–Cys101. Positions 79-90 (GYGSSSRRAPQT) are c. An a region spans residues 91–111 (GIVDECCFRSCDLRRLEMYCA). Residues 112 to 119 (PLKPAKSA) are d. Positions 120 to 154 (RSVRAQRHTDMPKAQKEVHLKNTSRGSAGNKNYRM) are cleaved as a propeptide — e peptide. The tract at residues 121–154 (SVRAQRHTDMPKAQKEVHLKNTSRGSAGNKNYRM) is disordered. Basic and acidic residues predominate over residues 126-139 (RHTDMPKAQKEVHL). The span at 140 to 154 (KNTSRGSAGNKNYRM) shows a compositional bias: polar residues.

This sequence belongs to the insulin family. In terms of assembly, forms a ternary complex with IGFR1 and ITGAV:ITGB3. Forms a ternary complex with IGFR1 and ITGA6:ITGB4. Forms a ternary complex with IGFBP3 and ALS.

It is found in the secreted. Functionally, the insulin-like growth factors, isolated from plasma, are structurally and functionally related to insulin but have a much higher growth-promoting activity. May be a physiological regulator of [1-14C]-2-deoxy-D-glucose (2DG) transport and glycogen synthesis in osteoblasts. Stimulates glucose transport in bone-derived osteoblastic (PyMS) cells and is effective at much lower concentrations than insulin, not only regarding glycogen and DNA synthesis but also with regard to enhancing glucose uptake. May play a role in synapse maturation. Ca(2+)-dependent exocytosis of IGF1 is required for sensory perception of smell in the olfactory bulb. Acts as a ligand for IGF1R. Binds to the alpha subunit of IGF1R, leading to the activation of the intrinsic tyrosine kinase activity which autophosphorylates tyrosine residues in the beta subunit thus initiating a cascade of down-stream signaling events leading to activation of the PI3K-AKT/PKB and the Ras-MAPK pathways. Binds to integrins ITGAV:ITGB3 and ITGA6:ITGB4. Its binding to integrins and subsequent ternary complex formation with integrins and IGFR1 are essential for IGF1 signaling. Induces the phosphorylation and activation of IGFR1, MAPK3/ERK1, MAPK1/ERK2 and AKT1. As part of the MAPK/ERK signaling pathway, acts as a negative regulator of apoptosis in cardiomyocytes via promotion of STUB1/CHIP-mediated ubiquitination and degradation of ICER-type isoforms of CREM. The protein is Insulin-like growth factor 1 of Bos taurus (Bovine).